The primary structure comprises 591 residues: Putative BTB/POZ domain-containing protein At5g13600 (591 aa).

The 68-residue stretch at 28–95 (PDVMIQVVDE…CYGVRIEVTP (68 aa)) folds into the BTB domain. Residues 208 to 493 (NWWFNDVSSF…VQVLFFEQMR (286 aa)) enclose the NPH3 domain. At Tyr434 the chain carries Phosphotyrosine.

It belongs to the NPH3 family.

It participates in protein modification; protein ubiquitination. May act as a substrate-specific adapter of an E3 ubiquitin-protein ligase complex (CUL3-RBX1-BTB) which mediates the ubiquitination and subsequent proteasomal degradation of target proteins. In Arabidopsis thaliana (Mouse-ear cress), this protein is Putative BTB/POZ domain-containing protein At5g13600.